A 147-amino-acid chain; its full sequence is Small ribosomal subunit protein uS12 (147 aa).

This sequence belongs to the universal ribosomal protein uS12 family. As to quaternary structure, part of the 30S ribosomal subunit.

Its function is as follows. With S4 and S5 plays an important role in translational accuracy. Located at the interface of the 30S and 50S subunits. The protein is Small ribosomal subunit protein uS12 of Pyrobaculum arsenaticum (strain DSM 13514 / JCM 11321 / PZ6).